Here is a 142-residue protein sequence, read N- to C-terminus: Small heat shock protein IbpB (142 aa).

The sHSP domain occupies 26–137 (AGESQSFPPY…APQRIAISER (112 aa)).

The protein belongs to the small heat shock protein (HSP20) family. As to quaternary structure, homodimer. Forms homomultimers of about 100-150 subunits at optimal growth temperatures. Conformation changes to oligomers at high temperatures or high ionic concentrations. The decrease in size of the multimers is accompanied by an increase in chaperone activity.

The protein localises to the cytoplasm. Associates with aggregated proteins, together with IbpA, to stabilize and protect them from irreversible denaturation and extensive proteolysis during heat shock and oxidative stress. Aggregated proteins bound to the IbpAB complex are more efficiently refolded and reactivated by the ATP-dependent chaperone systems ClpB and DnaK/DnaJ/GrpE. Its activity is ATP-independent. The polypeptide is Small heat shock protein IbpB (Klebsiella pneumoniae subsp. pneumoniae (strain ATCC 700721 / MGH 78578)).